The following is a 796-amino-acid chain: DnaJ homolog subfamily C member 10 (796 aa).

The first 33 residues, 1 to 33 (MKHSLNTATSSSSVLKRTILYLVLISLAALVYC), serve as a signal peptide directing secretion. The J domain occupies 36 to 100 (DYYDLLGVSK…DLRKKYDKYG (65 aa)). A Thioredoxin 1 domain is found at 131-233 (EIITLDRGEF…ERLVNFAMPY (103 aa)). Cysteine 159 and cysteine 162 are oxidised to a cystine. Trxb regions lie at residues 236–351 (STVT…LPDL) and 349–464 (PDLE…PTNF). 3 consecutive Thioredoxin domains span residues 455 to 554 (HVIT…IEDL), 558 to 668 (SVVT…ALMY), and 672 to 780 (ASFD…ITKR). Cysteine 481 and cysteine 484 form a disulfide bridge. An N-linked (GlcNAc...) asparagine glycan is attached at asparagine 531. Intrachain disulfides connect cysteine 589–cysteine 592 and cysteine 701–cysteine 704. Asparagine 753 is a glycosylation site (N-linked (GlcNAc...) asparagine). Residues 793-796 (KDEL) carry the Prevents secretion from ER motif.

It localises to the endoplasmic reticulum lumen. Functionally, endoplasmic reticulum disulfide reductase involved both in the correct folding of proteins and degradation of misfolded proteins. Required for efficient folding of proteins in the endoplasmic reticulum by catalyzing the removal of non-native disulfide bonds formed during the folding of proteins. Also involved in endoplasmic reticulum-associated degradation (ERAD) by reducing incorrect disulfide bonds in misfolded glycoproteins. The sequence is that of DnaJ homolog subfamily C member 10 (dnajc10) from Xenopus laevis (African clawed frog).